A 452-amino-acid polypeptide reads, in one-letter code: Activating transcription factor 7-interacting protein 2 (452 aa).

The residue at position 184 (serine 184) is a Phosphoserine. Residues 185-206 form a disordered region; the sequence is RSKRISSVNHTPLNSSEKAGRK. Serine 257 carries the phosphoserine modification. Residues 346-450 enclose the Fibronectin type-III domain; it reads PPQKPELKVK…IKSIPRFSEN (105 aa).

The protein belongs to the MCAF family. In terms of assembly, interacts with MBD1, SETDB1 and SP1. Probably forms a complex with SETDB1 and MBD1. As to expression, expressed in testis.

The protein localises to the nucleus. Functionally, recruiter that couples transcriptional factors to general transcription apparatus and thereby modulates transcription regulation and chromatin formation. Can both act as an activator or a repressor depending on the context. Mediates MBD1-dependent transcriptional repression, probably by recruiting complexes containing SETDB1. The complex formed with MBD1 and SETDB1 represses transcription and probably couples DNA methylation and histone H3 'Lys-9' trimethylation (H3K9me3) activity. The sequence is that of Activating transcription factor 7-interacting protein 2 (Atf7ip2) from Mus musculus (Mouse).